We begin with the raw amino-acid sequence, 303 residues long: MIQQRTLKNTIRATGVGLHSGDKVYMTLRPAPVNHGIVFRRVDLDPVVEVPAKAELVTEVTLCTGLTCNDAKIQTVEHLMSALAGLGVDNIIVELSSAELPIMDGSAGPFVFLLQSAGIVEQDAPKRFIRVLKTVEVTEGDKVARFSPYEGYKLGFTIQFDHPMIPAKQSRQEIEFSTLAYTKEISRARTFGFMRDLEYMRERNLGLGGSMDNAIVLDEFRVLNEDGLRYADEFVRHKILDAIGDLYLAGGQVLGAYEGFKSGHALNNKLVRALMADATAWEWVSFDSPATPDPVEYATPAYA.

Residues histidine 78, histidine 237, and aspartate 241 each contribute to the Zn(2+) site. The active-site Proton donor is the histidine 264.

Belongs to the LpxC family. Zn(2+) serves as cofactor.

It catalyses the reaction a UDP-3-O-[(3R)-3-hydroxyacyl]-N-acetyl-alpha-D-glucosamine + H2O = a UDP-3-O-[(3R)-3-hydroxyacyl]-alpha-D-glucosamine + acetate. It functions in the pathway glycolipid biosynthesis; lipid IV(A) biosynthesis; lipid IV(A) from (3R)-3-hydroxytetradecanoyl-[acyl-carrier-protein] and UDP-N-acetyl-alpha-D-glucosamine: step 2/6. Its function is as follows. Catalyzes the hydrolysis of UDP-3-O-myristoyl-N-acetylglucosamine to form UDP-3-O-myristoylglucosamine and acetate, the committed step in lipid A biosynthesis. This Stenotrophomonas maltophilia (strain K279a) protein is UDP-3-O-acyl-N-acetylglucosamine deacetylase.